Consider the following 495-residue polypeptide: MSLSRTTQLPFAKRQFFQVLARNYSNTQDADLVVIGGGPGGYVAAIKAAQLGMKTVCVEKNATLGGTCLNVGCIPSKALLNNSHYLHMAQHDFAARGIDCTASLNLPKMMEAKSNSVKQLTGGIKQLFKANKVGHVEGFATIVGPNTVQAKKNDGSVETINARNILIASGSEVTPFPGITIDEKQIVSSTGALSLGQVPKKMVVIGAGVIGLELGSVWQRLGAEVTAVEFLGHVGGMGIDGEVSKNFQRSLTKQGFKFLLNTKVMGASQNGSTITVEVEGAKDGKKQTLECDTLLVSVGRRPYTEGLGLSNVQIDLDNRGRVPVNERFQTKVPSIFAIGDVIEGPMLAHKAEDEGILCVEGIAGGPVHIDYNCVPSVVYTHPEVAWVGKAEEQLKQEGVAYKIGKFPFVANSRAKTNNDQEGFVKVLADKQTDRMLGVHIIGPNAGEMIAEATLAMEYGASAEDVARVCHPHPTLSEAFREANLAAYCGKAINNV.

FAD-binding positions include 59 to 68, Lys77, and 169 to 171; these read EKNATLGGTC and SGS. Cys68 and Cys73 are disulfide-bonded. NAD(+) is bound by residues 206-213, Glu229, Val264, and Gly299; that span reads GAGVIGLE. FAD contacts are provided by residues Asp340 and 346-349; that span reads MLAH. His472 (proton acceptor) is an active-site residue.

This sequence belongs to the class-I pyridine nucleotide-disulfide oxidoreductase family. Requires FAD as cofactor.

It localises to the mitochondrion matrix. It carries out the reaction N(6)-[(R)-dihydrolipoyl]-L-lysyl-[protein] + NAD(+) = N(6)-[(R)-lipoyl]-L-lysyl-[protein] + NADH + H(+). The polypeptide is Dihydrolipoyl dehydrogenase, mitochondrial (dld-1) (Caenorhabditis elegans).